Reading from the N-terminus, the 271-residue chain is Phosphonoacetaldehyde hydrolase (271 aa).

The Nucleophile role is filled by D12. Residues D12 and A14 each contribute to the Mg(2+) site. K54 (schiff-base intermediate with substrate) is an active-site residue. Residue D188 participates in Mg(2+) binding.

The protein belongs to the HAD-like hydrolase superfamily. PhnX family. Homodimer. Mg(2+) is required as a cofactor.

It catalyses the reaction phosphonoacetaldehyde + H2O = acetaldehyde + phosphate + H(+). Functionally, involved in phosphonate degradation. The sequence is that of Phosphonoacetaldehyde hydrolase from Vibrio vulnificus (strain CMCP6).